The sequence spans 475 residues: B-type cell cycle switch protein ccs52A (475 aa).

The disordered stretch occupies residues Met-1–Leu-29. The short motif at Arg-7–Ser-28 is the PEST motif element. Phosphoserine occurs at positions 43 and 45. The C-box signature appears at Asp-51 to Arg-57. A CSM motif motif is present at residues Ala-80–Gly-91. Phosphothreonine is present on Thr-99. Phosphoserine is present on residues Ser-144 and Ser-155. WD repeat units follow at residues Gln-166 to Leu-203, Gly-207 to Ser-246, Gly-249 to Ser-289, Gly-290 to Lys-329, Glu-332 to Cys-374, Asp-376 to Thr-417, and Gly-420 to Asn-459. Ser-454 carries the post-translational modification Phosphoserine.

Belongs to the WD repeat CDC20/Fizzy family. In terms of tissue distribution, mostly expressed in nodules, and, to a lower extent, in root tips, stems, hypocotyls, leaves, flower buds and flowers.

The protein resides in the nucleus. It participates in protein modification; protein ubiquitination. Functionally, component of the anaphase promoting complex/cyclosome (APC/C), a cell cycle-regulated E3 ubiquitin-protein ligase complex that controls progression through mitosis and the G1 phase of the cell cycle. Required to switch form cell proliferation to cell differentiation, endoreduplication and ploidy-dependent cell enlargement, including during nodulation, before nodule differentiation. Involved in root-knot nematode Meloidogyne incognita giant cells formation. In Medicago truncatula (Barrel medic), this protein is B-type cell cycle switch protein ccs52A.